We begin with the raw amino-acid sequence, 154 residues long: Small ribosomal subunit protein bS16 (154 aa).

Low complexity predominate over residues 111–121 (AAAGLAEAPTK). The tract at residues 111 to 154 (AAAGLAEAPTKPAKKAAKAEAAPKTDEAAPKTEEQAGAGSGEQG) is disordered. Residues 127–144 (AKAEAAPKTDEAAPKTEE) are compositionally biased toward basic and acidic residues.

The protein belongs to the bacterial ribosomal protein bS16 family.

The protein is Small ribosomal subunit protein bS16 of Salinispora tropica (strain ATCC BAA-916 / DSM 44818 / JCM 13857 / NBRC 105044 / CNB-440).